The following is a 235-amino-acid chain: Ubiquinone biosynthesis O-methyltransferase (235 aa).

Residues Arg40, Gly60, Asp81, and Met125 each contribute to the S-adenosyl-L-methionine site.

The protein belongs to the methyltransferase superfamily. UbiG/COQ3 family.

It catalyses the reaction a 3-demethylubiquinol + S-adenosyl-L-methionine = a ubiquinol + S-adenosyl-L-homocysteine + H(+). It carries out the reaction a 3-(all-trans-polyprenyl)benzene-1,2-diol + S-adenosyl-L-methionine = a 2-methoxy-6-(all-trans-polyprenyl)phenol + S-adenosyl-L-homocysteine + H(+). Its pathway is cofactor biosynthesis; ubiquinone biosynthesis. In terms of biological role, O-methyltransferase that catalyzes the 2 O-methylation steps in the ubiquinone biosynthetic pathway. This is Ubiquinone biosynthesis O-methyltransferase from Nitrosomonas europaea (strain ATCC 19718 / CIP 103999 / KCTC 2705 / NBRC 14298).